Here is a 588-residue protein sequence, read N- to C-terminus: MMEPPAAAARASCRRRPLLCLLLAALCMPPALGLYTVNAVYGDTITMPCRLEVPDGLMFGKWKYEMPNGSPVFIAFRSSTKKNVQYDDVPDYKDRLSLSENYTLSIKNARISDEKRFVCMLVTEDDVSEEPTVVKVFKQPSQPEILHQADFLETEKLKMLGECVVRDSYPEGNVTWYKNGRVLQPVEEVVVINLRKVENRSTGLFTMTSSLQYMPTKEDANAKFTCIVTYHGPSGQKTIQSEPVVFDVHYPTEKVTIRVLSQSSTIKEGDNVTLKCSGNGNPPPQEFLFYIPGETEGIRSSDTYVMTDVRRNATGEYKCSLIDKSMMDATTITVHYLDLQLTPSGEVTKQIGEALPVSCTISSSRNATVFWIKDNTRMKTSPSFSSLQYQDAGNYICETTLQEVEGLKKRKTLKLIVEGKPQIKMTKKTNTNKMSKTIVCHVEGFPKPAVQWTVTGSGSLINKTEETKYVNGKFSSKIIIAPEENVTLTCIAENELERTVTSLNVSAISIPEYDEPEDRNDDNSEKVNDQAKLIVGIVVGLLLVALVAGVVYWLYVKKSKTASKHVDKDLGNIEENKKLEENNHKSET.

The first 33 residues, Met-1 to Gly-33, serve as a signal peptide directing secretion. 2 Ig-like V-type domains span residues Leu-34 to Asp-126 and Pro-131 to Gln-240. The Extracellular segment spans residues Leu-34–Lys-532. Cystine bridges form between Cys-49–Cys-119 and Cys-163–Cys-226. N-linked (GlcNAc...) asparagine glycosylation is found at Asn-101, Asn-173, Asn-199, Asn-271, Asn-312, Asn-366, Asn-462, Asn-485, and Asn-504. Ig-like C2-type domains follow at residues Pro-251–Thr-333, Asp-338–Lys-414, and Pro-421–Thr-501. Cystine bridges form between Cys-276–Cys-319, Cys-359–Cys-397, and Cys-440–Cys-490. Residues Leu-533 to Trp-553 traverse the membrane as a helical segment. Residues Leu-554 to Thr-588 lie on the Cytoplasmic side of the membrane.

As to quaternary structure, homodimer. Interacts (via extracellular domain) with CD6 (via extracellular domain). Homodimerization and interaction with CD6 involve the same region and cannot occur simultaneously. The affinity for CD6 is much higher than the affinity for self-association. In terms of processing, glycosylated. In terms of tissue distribution, detected in embryo. Detected in embryonic spinal cord and embryonic brain. Within the spinal cord it is localized to axons in the dorsal funiculus, midline floor plate cells, and motoneurons. Detected in embryonic epithelia and brain. After hatching, detected in bursa of Fabricius and thymus. Detected on embryonic retinal ganglion cell axon growth cones (at protein level). Detected in embryonic retina and in the optic fiber layer, which is composed of retinal ganglion cell axons and their growth cones.

It is found in the cell membrane. It localises to the cell projection. The protein resides in the axon. Its subcellular location is the dendrite. In terms of biological role, cell adhesion molecule that mediates both heterotypic cell-cell contacts via its interaction with CD6, as well as homotypic cell-cell contacts. Promotes T-cell activation and proliferation via its interactions with CD6. Contributes to the formation and maturation of the immunological synapse via its interactions with CD6. Mediates homotypic interactions with cells that express ALCAM. Mediates attachment of dendritic cells onto endothelial cells via homotypic interaction. Inhibits endothelial cell migration and promotes endothelial tube formation via homotypic interactions. Required for normal organization of the lymph vessel network. Required for normal hematopoietic stem cell engraftment in the bone marrow. Plays a role in hematopoiesis; required for normal numbers of hematopoietic stem cells in bone marrow. Promotes in vitro osteoblast proliferation and differentiation. Promotes neurite extension, axon growth and axon guidance; axons grow preferentially on surfaces that contain ALCAM. Mediates outgrowth and pathfinding for retinal ganglion cell axons. In Gallus gallus (Chicken), this protein is CD166 antigen (ALCAM).